Here is a 187-residue protein sequence, read N- to C-terminus: ADP-ribosylation factor-like protein 9 (187 aa).

GTP contacts are provided by residues 25–32 (GLDGAGKT), 69–73 (EIGGS), and 126–129 (NKQD).

The protein belongs to the small GTPase superfamily. Arf family.

This Homo sapiens (Human) protein is ADP-ribosylation factor-like protein 9 (ARL9).